The sequence spans 286 residues: Elongation factor Ts (286 aa).

The tract at residues 82 to 85 (TDFV) is involved in Mg(2+) ion dislocation from EF-Tu. Residues 212–286 (VAAQTGQKVE…SPSKKGKKKK (75 aa)) form a disordered region. The segment covering 215–227 (QTGQKVEQPQAAQ) has biased composition (polar residues). Residues 253–269 (ETDSPAAETTTEPPKTT) are compositionally biased toward low complexity.

This sequence belongs to the EF-Ts family.

The protein localises to the cytoplasm. Functionally, associates with the EF-Tu.GDP complex and induces the exchange of GDP to GTP. It remains bound to the aminoacyl-tRNA.EF-Tu.GTP complex up to the GTP hydrolysis stage on the ribosome. The polypeptide is Elongation factor Ts (Gloeothece citriformis (strain PCC 7424) (Cyanothece sp. (strain PCC 7424))).